Consider the following 209-residue polypeptide: Pyridoxal 5'-phosphate synthase subunit PdxT (209 aa).

Gly58–Ser60 lines the L-glutamine pocket. Catalysis depends on Cys90, which acts as the Nucleophile. L-glutamine-binding positions include Arg119 and Ile148–Arg149. Residues His185 and Glu187 each act as charge relay system in the active site.

The protein belongs to the glutaminase PdxT/SNO family. In terms of assembly, in the presence of PdxS, forms a dodecamer of heterodimers. Only shows activity in the heterodimer.

It carries out the reaction aldehydo-D-ribose 5-phosphate + D-glyceraldehyde 3-phosphate + L-glutamine = pyridoxal 5'-phosphate + L-glutamate + phosphate + 3 H2O + H(+). The catalysed reaction is L-glutamine + H2O = L-glutamate + NH4(+). It participates in cofactor biosynthesis; pyridoxal 5'-phosphate biosynthesis. Its function is as follows. Catalyzes the hydrolysis of glutamine to glutamate and ammonia as part of the biosynthesis of pyridoxal 5'-phosphate. The resulting ammonia molecule is channeled to the active site of PdxS. The polypeptide is Pyridoxal 5'-phosphate synthase subunit PdxT (Clavibacter michiganensis subsp. michiganensis (strain NCPPB 382)).